The sequence spans 37 residues: Large ribosomal subunit protein bL36 (37 aa).

It belongs to the bacterial ribosomal protein bL36 family.

The sequence is that of Large ribosomal subunit protein bL36 from Nocardia farcinica (strain IFM 10152).